Reading from the N-terminus, the 255-residue chain is Small ribosomal subunit protein eS1 (255 aa).

A compositionally biased stretch (basic residues) spans 1 to 18 (MAVGKNKRLSKGKKGLKK). Positions 1–28 (MAVGKNKRLSKGKKGLKKRTQDPFSRKD) are disordered. A2 carries the post-translational modification N-acetylalanine; partial. Residues 19 to 28 (RTQDPFSRKD) show a composition bias toward basic and acidic residues.

The protein belongs to the eukaryotic ribosomal protein eS1 family. Component of the small ribosomal subunit. Mature ribosomes consist of a small (40S) and a large (60S) subunit. The 40S subunit contains about 33 different proteins and 1 molecule of RNA (18S). The 60S subunit contains about 49 different proteins and 3 molecules of RNA (25S, 5.8S and 5S).

The protein resides in the cytoplasm. This chain is Small ribosomal subunit protein eS1, found in Ajellomyces capsulatus (strain G186AR / H82 / ATCC MYA-2454 / RMSCC 2432) (Darling's disease fungus).